Consider the following 257-residue polypeptide: MGKVYIVGAGPGDPDLLTIKALKAIEKADVILYDRLVNKEILQYAKEQADLIYCGKLPDFHTMKQETINRFLVKYAQKGKMVVRLKGGDPFVFGRGGEEAECLSENGIPFEIIPGITSGIAAAAYAGIPVTHRDAGSNVAFVTGHYKKEEDFEEKWKALATGIDTLVIYMGIKNVQQIERKLLENGRDGSTPAAFIHWGTTDKQKSVFCTVDTLSETVIKENITNPSLIVIGNVVNYHYKLEWFESELKKQDLSEAL.

Residues proline 11, 87 to 89, 117 to 118, and methionine 170 contribute to the S-adenosyl-L-homocysteine site; these read GGD and TS.

The protein belongs to the precorrin methyltransferase family.

It carries out the reaction uroporphyrinogen III + 2 S-adenosyl-L-methionine = precorrin-2 + 2 S-adenosyl-L-homocysteine + H(+). The protein operates within cofactor biosynthesis; adenosylcobalamin biosynthesis; precorrin-2 from uroporphyrinogen III: step 1/1. It participates in porphyrin-containing compound metabolism; siroheme biosynthesis; precorrin-2 from uroporphyrinogen III: step 1/1. Its function is as follows. Catalyzes the two successive C-2 and C-7 methylation reactions involved in the conversion of uroporphyrinogen III to precorrin-2 via the intermediate formation of precorrin-1. It is a step in the biosynthesis of both cobalamin (vitamin B12) and siroheme. In Bacillus subtilis (strain 168), this protein is Uroporphyrinogen-III C-methyltransferase (sumT).